A 638-amino-acid chain; its full sequence is Homeobox protein 10 (638 aa).

Disordered regions lie at residues 23-55 (ETQPTTPTTQPTTPTTNTISTTTNTITSTLNTN), 76-139 (TDEN…VNTN), and 195-219 (IANEDKESLPEPQTNSNVNGNEEAK). Composition is skewed to low complexity over residues 24–55 (TQPTTPTTQPTTPTTNTISTTTNTITSTLNTN) and 80–139 (NTSV…VNTN). Residues 205 to 214 (EPQTNSNVNG) show a composition bias toward polar residues. A DNA-binding region (homeobox) is located at residues 301-360 (NKKKRQRTSPEQLAILEQIFETDKMPSQQIRVRLANQLGMSSRRVQIWFQNKRAKVKRGG). Disordered stretches follow at residues 381 to 431 (EDED…TSSD) and 448 to 638 (SSSS…IVKN). 3 stretches are compositionally biased toward low complexity: residues 388 to 411 (SLTIDESGNNNNNSGNNNNNNNNG), 419 to 430 (LSSSPTNLNTSS), and 462 to 501 (NNTNNNNNNNNNNNNNNNNNNNNNNNHTTTTTTTTTTTTT). Polar residues-rich tracts occupy residues 502 to 522 (SSSPPLTSFNFQLNQSLNKLT) and 545 to 573 (SLNSTASSLPSFPQIKLNSSSKHIPTDKQ). The span at 575–625 (NSDFSNFNNNNNNNNNNNNNNNNNNNINNNGNNNSNNNDSNNNNNKSNFSD) shows a compositional bias: low complexity.

Its subcellular location is the nucleus. Its function is as follows. Putative transcription factor. The chain is Homeobox protein 10 (hbx10) from Dictyostelium discoideum (Social amoeba).